A 273-amino-acid chain; its full sequence is Protein N-terminal and lysine N-methyltransferase EFM7 (273 aa).

The interval 1–32 (MSDIEDLASGGLFDEPKDFYKPEEQPGSDSYA) is disordered. The span at 14–24 (DEPKDFYKPEE) shows a compositional bias: basic and acidic residues. S-adenosyl-L-methionine is bound by residues W65, 92–94 (GAG), D114, W161, and S183.

Belongs to the class I-like SAM-binding methyltransferase superfamily. EFM7 family.

The protein resides in the cytoplasm. Its function is as follows. S-adenosyl-L-methionine-dependent protein methyltransferase that trimethylates the N-terminal glycine 'Gly-2' of elongation factor 1-alpha, before also catalyzing the mono- and dimethylation of 'Lys-3'. This chain is Protein N-terminal and lysine N-methyltransferase EFM7, found in Yarrowia lipolytica (strain CLIB 122 / E 150) (Yeast).